We begin with the raw amino-acid sequence, 334 residues long: Serpentine receptor class alpha-11 (334 aa).

Over 1–23 the chain is Extracellular; the sequence is MTTNNPVCASDAHMEMYSSKLYT. The chain crosses the membrane as a helical span at residues 24–44; it reads SALFLNLIIATTSMILTGFAI. At 45–57 the chain is on the cytoplasmic side; sequence QKLFMESIINIST. The chain crosses the membrane as a helical span at residues 58-80; sequence RMFLFCGLMCCSLHQTAYIVLRI. The Extracellular segment spans residues 81-105; the sequence is QVIYQVFFKLSEPCNLYYPAIDCKY. The helical transmembrane segment at 106-126 threads the bilayer; sequence VTFSLVAGNTGMIFIQSAMTI. The Cytoplasmic segment spans residues 127–145; sequence DRIFATIFPKLWPKLKYWP. Residues 146–166 form a helical membrane-spanning segment; sequence GVVLSILMIACNYANVQIIFW. Residues 167-191 lie on the Extracellular side of the membrane; it reads GDPLTEYVPTCGQFPSKSVNRFQTF. Residues 192-212 traverse the membrane as a helical segment; the sequence is LAIALYMSIAHMVINVIILYI. Residues 213–239 are Cytoplasmic-facing; sequence NVLQDRQQSKSFNVNQRYQSREALKSS. A helical transmembrane segment spans residues 240–260; that stretch reads QAIFFLSMSQFFACLIYSVFT. The Extracellular segment spans residues 261 to 277; it reads KVFLEFQLNLSPLQSGL. The chain crosses the membrane as a helical span at residues 278–298; sequence VLALSYTTPYACIAIPSLIIF. The Cytoplasmic portion of the chain corresponds to 299–334; the sequence is TFRFIKNQRLRNINELRSQTETGDECMRKIAKIWEK.

Belongs to the nematode receptor-like protein sra family. As to expression, expressed in interneurons AIY and AVB in L1 larvae. In adults, strong expression is seen in AIY and AIA but only weak expression in AVB.

It localises to the membrane. Its function is as follows. A G protein-coupled receptor required for olfactory imprinting a requisite in ordorant response such as benzaldehyde and isoamylalcohol. The protein is Serpentine receptor class alpha-11 (sra-11) of Caenorhabditis elegans.